Consider the following 72-residue polypeptide: Translation initiation factor IF-1 (72 aa).

The region spanning 1–72 (MSKEDVIELE…TRGRIVWRSK (72 aa)) is the S1-like domain.

Belongs to the IF-1 family. As to quaternary structure, component of the 30S ribosomal translation pre-initiation complex which assembles on the 30S ribosome in the order IF-2 and IF-3, IF-1 and N-formylmethionyl-tRNA(fMet); mRNA recruitment can occur at any time during PIC assembly.

Its subcellular location is the cytoplasm. One of the essential components for the initiation of protein synthesis. Stabilizes the binding of IF-2 and IF-3 on the 30S subunit to which N-formylmethionyl-tRNA(fMet) subsequently binds. Helps modulate mRNA selection, yielding the 30S pre-initiation complex (PIC). Upon addition of the 50S ribosomal subunit IF-1, IF-2 and IF-3 are released leaving the mature 70S translation initiation complex. The chain is Translation initiation factor IF-1 from Caldicellulosiruptor saccharolyticus (strain ATCC 43494 / DSM 8903 / Tp8T 6331).